Consider the following 448-residue polypeptide: 4-hydroxybenzoate transporter PcaK (448 aa).

At 1–30 (MNQAQNSVGKSLDVQSFINQQPLSRYQWRV) the chain is on the cytoplasmic side. A helical transmembrane segment spans residues 31 to 51 (VLLCFLIVFLDGLDTAAMGFI). The Periplasmic portion of the chain corresponds to 52-67 (APALSQEWGIDRASLG). Residues 68 to 88 (PVMSAALIGMVFGALGSGPLA) form a helical membrane-spanning segment. Over 89–94 (DRFGRK) the chain is Cytoplasmic. The helical transmembrane segment at 95 to 115 (GVLVGAVLVFGGFSLASAYAT) threads the bilayer. Topologically, residues 116-119 (NVDQ) are periplasmic. Residues 120–140 (LLVLRFLTGLGLGAGMPNATT) traverse the membrane as a helical segment. Residues 141–152 (LLSEYTPERLKS) are Cytoplasmic-facing. The chain crosses the membrane as a helical span at residues 153–173 (LLVTSMFCGFNLGMAGGGFIS). Residues 174–184 (AKMIPAYGWHS) lie on the Periplasmic side of the membrane. The helical transmembrane segment at 185-205 (LLVIGGVLPLLLALVLMVWLP) threads the bilayer. Residues 206–261 (ESARFLVVRNRGTDKIRKTLSPIAPQVVAEAGSFSVPEQKAVAARSVFAVIFSGTY) lie on the Cytoplasmic side of the membrane. Residues 262–282 (GLGTMLLWLTYFMGLVIVYLL) traverse the membrane as a helical segment. At 283–301 (TSWLPTLMRDSGASMEQAA) the chain is on the periplasmic side. Residues 302-322 (FIGALFQFGGVLSAVGVGWAM) traverse the membrane as a helical segment. Residues 323–329 (DRYNPHK) are Cytoplasmic-facing. The helical transmembrane segment at 330 to 350 (VIGIFYLLAGVFAYAVGQSLG) threads the bilayer. A topological domain (periplasmic) is located at residue N351. Residues 352-372 (ITVLATLVLIAGMCVNGAQSA) traverse the membrane as a helical segment. Topologically, residues 373-398 (MPSLAARFYPTQGRATGVSWMLGIGR) are cytoplasmic. A helical transmembrane segment spans residues 399–419 (FGAILGAWSGATLLGLGWNFE). Topologically, residues 420–421 (QV) are periplasmic. Residues 422-442 (LTALLVPAALATVGVIVKGLV) form a helical membrane-spanning segment. Topologically, residues 443 to 448 (SHADAT) are cytoplasmic.

The protein belongs to the major facilitator superfamily. Aromatic acid:H(+) symporter (AAHS) (TC 2.A.1.15) family.

Its subcellular location is the cell inner membrane. Functionally, transports 4-hydroxybenzoate (4-HBA) and protocatechuate across the membrane. Driven by the proton motive force. Also functions as a chemoreceptor, which is required for chemotaxis to aromatic acids. The protein is 4-hydroxybenzoate transporter PcaK (pcaK) of Pseudomonas putida (Arthrobacter siderocapsulatus).